The sequence spans 345 residues: Anthranilate phosphoribosyltransferase (345 aa).

5-phospho-alpha-D-ribose 1-diphosphate contacts are provided by residues glycine 86, 89–90 (GD), threonine 94, 96–99 (NIST), 114–122 (KHGNRNLSS), and alanine 126. Residue glycine 86 participates in anthranilate binding. Residue serine 98 coordinates Mg(2+). Asparagine 117 contributes to the anthranilate binding site. Arginine 172 serves as a coordination point for anthranilate. Aspartate 231 and glutamate 232 together coordinate Mg(2+).

The protein belongs to the anthranilate phosphoribosyltransferase family. Homodimer. Mg(2+) is required as a cofactor.

The catalysed reaction is N-(5-phospho-beta-D-ribosyl)anthranilate + diphosphate = 5-phospho-alpha-D-ribose 1-diphosphate + anthranilate. Its pathway is amino-acid biosynthesis; L-tryptophan biosynthesis; L-tryptophan from chorismate: step 2/5. Functionally, catalyzes the transfer of the phosphoribosyl group of 5-phosphorylribose-1-pyrophosphate (PRPP) to anthranilate to yield N-(5'-phosphoribosyl)-anthranilate (PRA). This is Anthranilate phosphoribosyltransferase from Jannaschia sp. (strain CCS1).